The sequence spans 185 residues: MKSLEEKTIAKEQIFSGKVIDLYVEDVELPNGKASKREIVKHPGAVAVLAVTDEGKIIMVKQFRKPLERTIVEIPAGKLEKGEEPEYTALRELEEETGYTAKKLTKITAFYTSPGFADEIVHVFLAEELSVLEEKRELDEDEFVEVMEVTLEDALKLVESREVYDAKTAYAIQYLQLKEALQAQK.

Substrate contacts are provided by residues 14–15, 37–38, and R64; these read IF and RE. In terms of domain architecture, Nudix hydrolase spans 40 to 171; that stretch reads VKHPGAVAVL…EVYDAKTAYA (132 aa). Positions 76, 92, and 96 each coordinate Mg(2+). The short motif at 77–98 is the Nudix box element; the sequence is GKLEKGEEPEYTALRELEEETG. Substrate-binding positions include 113–115 and E119; that span reads SPG. E140 acts as the Proton acceptor in catalysis. E142 is a Mg(2+) binding site.

Belongs to the Nudix hydrolase family. NudF subfamily. It depends on Mg(2+) as a cofactor.

The catalysed reaction is ADP-D-ribose + H2O = D-ribose 5-phosphate + AMP + 2 H(+). Acts on ADP-mannose and ADP-glucose as well as ADP-ribose. Prevents glycogen biosynthesis. The reaction catalyzed by this enzyme is a limiting step of the gluconeogenic process. This Bacillus subtilis (strain 168) protein is ADP-ribose pyrophosphatase (nudF).